A 337-amino-acid polypeptide reads, in one-letter code: ATP-dependent 6-phosphofructokinase (337 aa).

G11 contacts ATP. 21-25 serves as a coordination point for ADP; it reads RAVVR. Residues 72–73 and 102–105 each bind ATP; these read RY and GDGS. D103 provides a ligand contact to Mg(2+). 125 to 127 is a binding site for substrate; that stretch reads TID. The active-site Proton acceptor is D127. R154 is a binding site for ADP. Substrate is bound by residues R162 and 169 to 171; that span reads MGR. Residues 185-187, K212, and 214-216 contribute to the ADP site; these read GAD and KNH. Substrate is bound by residues E223, R245, and 251-254; that span reads HILR.

Belongs to the phosphofructokinase type A (PFKA) family. ATP-dependent PFK group I subfamily. Prokaryotic clade 'B1' sub-subfamily. Homotetramer. Requires Mg(2+) as cofactor.

Its subcellular location is the cytoplasm. The enzyme catalyses beta-D-fructose 6-phosphate + ATP = beta-D-fructose 1,6-bisphosphate + ADP + H(+). Its pathway is carbohydrate degradation; glycolysis; D-glyceraldehyde 3-phosphate and glycerone phosphate from D-glucose: step 3/4. Its activity is regulated as follows. Allosterically activated by ADP and other diphosphonucleosides, and allosterically inhibited by phosphoenolpyruvate. In terms of biological role, catalyzes the phosphorylation of D-fructose 6-phosphate to fructose 1,6-bisphosphate by ATP, the first committing step of glycolysis. The chain is ATP-dependent 6-phosphofructokinase from Streptococcus pyogenes serotype M3 (strain SSI-1).